A 321-amino-acid chain; its full sequence is MGNVVQERQGALAQGEVLPRPAASQSEGFKQGRSVLNSLVSGAFAGAVAKTAVAPLDRTKIIFQVSSNRFSAKEAYRLIYRTYLKDGFFSLWRGNSATMVRVIPYAAIQFCAHEQYKGILGKYYGFQGKALPPVPRLLAGSLAGTTAAIITYPLDMVRARMAVTPKEMYSNIMDVFVRISREEGLKTLYRGFTPTILGVVPYAGLSFFTYETLKKTHAEKTGRAHPFPYERLVFGACAGLIGQSASYPLDVVRRRMQTAGVTGHTYSTVLGTMREIVAEEGIVRGLYKGLSMNWVKGPIAVGISFMTFDLTQILLRKFQLL.

Solcar repeat units follow at residues 33–119, 131–216, and 226–314; these read RSVL…YKGI, LPPV…LKKT, and PFPY…TQIL. 6 helical membrane passes run 35 to 55, 91 to 111, 137 to 154, 191 to 208, 232 to 252, and 295 to 315; these read VLNS…AVAP, LWRG…IQFC, LLAG…TYPL, GFTP…LSFF, LVFG…LDVV, and VKGP…QILL.

This sequence belongs to the mitochondrial carrier (TC 2.A.29) family.

The protein resides in the mitochondrion inner membrane. It catalyses the reaction ADP(out) + CoA(in) = ADP(in) + CoA(out). The catalysed reaction is 3'-dephospho-CoA(in) + ADP(out) = 3'-dephospho-CoA(out) + ADP(in). The enzyme catalyses adenosine 3',5'-bisphosphate(in) + ADP(out) = adenosine 3',5'-bisphosphate(out) + ADP(in). It carries out the reaction AMP(in) + ADP(out) = AMP(out) + ADP(in). It catalyses the reaction dADP(in) + ADP(out) = dADP(out) + ADP(in). The catalysed reaction is ADP(in) + ATP(out) = ADP(out) + ATP(in). In terms of biological role, mitochondrial carrier mediating the transport of coenzyme A (CoA) in mitochondria in exchange for intramitochondrial (deoxy)adenine nucleotides and adenosine 3',5'-diphosphate. The protein is Mitochondrial coenzyme A transporter SLC25A42 (slc25a42) of Danio rerio (Zebrafish).